The chain runs to 263 residues: Endonuclease 8 (263 aa).

P2 acts as the Schiff-base intermediate with DNA in catalysis. Catalysis depends on E3, which acts as the Proton donor. The Proton donor; for beta-elimination activity role is filled by K53. The DNA site is built by Q70, R125, and N169. The segment at K229–K263 adopts an FPG-type zinc-finger fold. R253 (proton donor; for delta-elimination activity) is an active-site residue.

It belongs to the FPG family. The cofactor is Zn(2+).

The enzyme catalyses 2'-deoxyribonucleotide-(2'-deoxyribose 5'-phosphate)-2'-deoxyribonucleotide-DNA = a 3'-end 2'-deoxyribonucleotide-(2,3-dehydro-2,3-deoxyribose 5'-phosphate)-DNA + a 5'-end 5'-phospho-2'-deoxyribonucleoside-DNA + H(+). Its function is as follows. Involved in base excision repair of DNA damaged by oxidation or by mutagenic agents. Acts as a DNA glycosylase that recognizes and removes damaged bases. Has a preference for oxidized pyrimidines, such as thymine glycol, 5,6-dihydrouracil and 5,6-dihydrothymine. Has AP (apurinic/apyrimidinic) lyase activity and introduces nicks in the DNA strand. Cleaves the DNA backbone by beta-delta elimination to generate a single-strand break at the site of the removed base with both 3'- and 5'-phosphates. This is Endonuclease 8 from Salmonella paratyphi B (strain ATCC BAA-1250 / SPB7).